An 89-amino-acid chain; its full sequence is MEYQYPLDYNWSNEEMVAVVKFYEAIEKVYEKGVLREDLMELYRRFKEIVPSKAAEKKIDKEFQEVSGYSIYRTIQRAKEVAEKKIVKM.

The protein belongs to the UPF0223 family.

In Bacillus mycoides (strain KBAB4) (Bacillus weihenstephanensis), this protein is UPF0223 protein BcerKBAB4_3787.